A 90-amino-acid chain; its full sequence is MRDPVSSQYSSFLFWRMPIPELDLSELEGLGLSDTATYKVKDSSVGKMIGQATAADQEKNPEGDGLLEYSTFNFWRAPIASIHSFELDLL.

The Nuclear export signal motif lies at 24–32 (LSELEGLGL). Ser84 is subject to Phosphoserine.

This sequence belongs to the MLLT11 family. In terms of assembly, interacts with HSPA8 and LAMP2 isoform A; the interaction may target MLLT11 for degradation via chaperone-mediated autophagy. Interacts with TCF7. In terms of processing, ubiquitinated, leading to degradation. In terms of tissue distribution, expressed in myoepithelial cells of normal breast tissue (at protein level). Highly expressed in thymus. Expressed in colon, small intestine, prostate and ovary. Not detected in peripheral blood lymphocytes and spleen.

It is found in the nucleus. The protein localises to the cytoplasm. Its subcellular location is the cytoskeleton. The protein resides in the microtubule organizing center. It localises to the centrosome. Cofactor for the transcription factor TCF7. Involved in regulation of lymphoid development by driving multipotent hematopoietic progenitor cells towards a T cell fate. This Homo sapiens (Human) protein is Protein AF1q (MLLT11).